The chain runs to 424 residues: Histidine--tRNA ligase (424 aa).

Belongs to the class-II aminoacyl-tRNA synthetase family. Homodimer.

It localises to the cytoplasm. The catalysed reaction is tRNA(His) + L-histidine + ATP = L-histidyl-tRNA(His) + AMP + diphosphate + H(+). The protein is Histidine--tRNA ligase of Shewanella halifaxensis (strain HAW-EB4).